A 61-amino-acid polypeptide reads, in one-letter code: Protein SspF (61 aa).

It belongs to the alpha/beta-type SASP family.

May play some important role in either sporulation or the dormant spore. The sequence is that of Protein SspF (sspF) from Bacillus subtilis (strain 168).